The sequence spans 609 residues: Adenine deaminase (609 aa).

Belongs to the metallo-dependent hydrolases superfamily. Adenine deaminase family. Requires Mn(2+) as cofactor.

The enzyme catalyses adenine + H2O + H(+) = hypoxanthine + NH4(+). The sequence is that of Adenine deaminase from Cenarchaeum symbiosum (strain A).